The sequence spans 165 residues: Alanine- and arginine-rich domain-containing protein (165 aa).

Residues 136–165 (QQLKKRQDQERASKPQSPQDEEMNPECGNA) are disordered.

The polypeptide is Alanine- and arginine-rich domain-containing protein (Aard) (Rattus norvegicus (Rat)).